The chain runs to 601 residues: UBA domain-containing protein 3 (601 aa).

One can recognise an Arf-GAP domain in the interval 7 to 129 (ETAIRELVQS…LFLDENHSTN (123 aa)). Disordered regions lie at residues 123–158 (DENH…KSRY) and 289–310 (EPNQ…SSMG). A compositionally biased stretch (low complexity) spans 139–156 (TKSSSQSSPMASTSTSKS). Positions 157–197 (RYADSLSTLHDMGFSDDSVNTHALEETNGDVTRAIEKIVQH) constitute a UBA domain.

In Schizosaccharomyces pombe (strain 972 / ATCC 24843) (Fission yeast), this protein is UBA domain-containing protein 3 (ucp3).